The following is a 165-amino-acid chain: Methylated-DNA--protein-cysteine methyltransferase, constitutive (165 aa).

Cys-130 acts as the Nucleophile; methyl group acceptor in catalysis.

This sequence belongs to the MGMT family.

It is found in the cytoplasm. It carries out the reaction a 6-O-methyl-2'-deoxyguanosine in DNA + L-cysteinyl-[protein] = S-methyl-L-cysteinyl-[protein] + a 2'-deoxyguanosine in DNA. The catalysed reaction is a 4-O-methyl-thymidine in DNA + L-cysteinyl-[protein] = a thymidine in DNA + S-methyl-L-cysteinyl-[protein]. Functionally, involved in the cellular defense against the biological effects of O6-methylguanine (O6-MeG) and O4-methylthymine (O4-MeT) in DNA. Repairs the methylated nucleobase in DNA by stoichiometrically transferring the methyl group to a cysteine residue in the enzyme. This is a suicide reaction: the enzyme is irreversibly inactivated. In Bacillus subtilis (strain 168), this protein is Methylated-DNA--protein-cysteine methyltransferase, constitutive.